Consider the following 569-residue polypeptide: Probable pyruvate decarboxylase Pdc101 (569 aa).

Residues Asp-33 and His-120 each coordinate substrate. At Ser-233 the chain carries Phosphoserine. Positions 396-478 (DSWFNGLQMK…FLLNNRGYTI (83 aa)) are thiamine pyrophosphate binding. Mg(2+)-binding residues include Asp-446, Asn-473, and Gly-475. Glu-479 contributes to the substrate binding site. Residue Thr-521 is modified to Phosphothreonine. Residue Ser-522 is modified to Phosphoserine.

Belongs to the TPP enzyme family. In terms of assembly, homotetramer. The cofactor is a metal cation. Thiamine diphosphate serves as cofactor.

The enzyme catalyses a 2-oxocarboxylate + H(+) = an aldehyde + CO2. This chain is Probable pyruvate decarboxylase Pdc101 (pdc101), found in Schizosaccharomyces pombe (strain 972 / ATCC 24843) (Fission yeast).